The sequence spans 379 residues: Anhydro-N-acetylmuramic acid kinase (379 aa).

9–16 lines the ATP pocket; the sequence is GTSADGVD.

This sequence belongs to the anhydro-N-acetylmuramic acid kinase family.

The catalysed reaction is 1,6-anhydro-N-acetyl-beta-muramate + ATP + H2O = N-acetyl-D-muramate 6-phosphate + ADP + H(+). It functions in the pathway amino-sugar metabolism; 1,6-anhydro-N-acetylmuramate degradation. Its pathway is cell wall biogenesis; peptidoglycan recycling. In terms of biological role, catalyzes the specific phosphorylation of 1,6-anhydro-N-acetylmuramic acid (anhMurNAc) with the simultaneous cleavage of the 1,6-anhydro ring, generating MurNAc-6-P. Is required for the utilization of anhMurNAc either imported from the medium or derived from its own cell wall murein, and thus plays a role in cell wall recycling. The chain is Anhydro-N-acetylmuramic acid kinase from Prochlorococcus marinus (strain MIT 9313).